The following is a 144-amino-acid chain: MESDREIIHLQHRHSTPGGNQRHINLNHYATKKSVAESMLDVALFMSNAMRLKSVLEQGPFSQYYTTLLTLISASLLLQVVIGILLVVIARLNLNEVENQWRLNQLNNAATTLVFITVVINIFITAFGAHKTGSVAARTSSNPI.

Residues 1–62 are Extracellular-facing; that stretch reads MESDREIIHL…KSVLEQGPFS (62 aa). Residues 27 to 39 are helix alpha1; sequence NHYATKKSVAESM. The interval 40–59 is helix alpha2; it reads LDVALFMSNAMRLKSVLEQG. The chain crosses the membrane as a helical span at residues 63-94; the sequence is QYYTTLLTLISASLLLQVVIGILLVVIARLNL. At 95 to 98 the chain is on the cytoplasmic side; the sequence is NEVE. Residues 99–128 form a helical membrane-spanning segment; the sequence is NQWRLNQLNNAATTLVFITVVINIFITAFG. Gln105 contributes to the cholesterol binding site. The Extracellular portion of the chain corresponds to 129–144; sequence AHKTGSVAARTSSNPI.

Belongs to the ninjurin family. In terms of assembly, homooligomer; in response to stimuli, homooligomerizes into filaments. In contrast to NINJ1, the filament is curved toward the intracellular space, preventing its circularization on a relatively flat membrane to mediate plasma membrane rupture: curvature is caused by cholesterol-binding at the cytoplasmic leaflet.

Its subcellular location is the cell membrane. In terms of biological role, its role in unclear. In contrast to NINJ1 paralog, does not mediate plasma membrane rupture (cytolysis) downstream of necroptotic and pyroptotic programmed cell death. While it is able to oligomerize and form filaments, filaments are curved toward the intracellular space, preventing circularization to mediate plasma membrane rupture. May act as a homophilic transmembrane adhesion molecule involved in nerve regeneration. Promotes axonal growth. The sequence is that of Ninjurin-2 (Ninj2) from Rattus norvegicus (Rat).